Here is an 80-residue protein sequence, read N- to C-terminus: Protein OPG051 (80 aa).

It belongs to the orthopoxvirus OPG051 family.

This chain is Protein OPG051 (OPG051), found in Vaccinia virus (strain Western Reserve) (VACV).